Reading from the N-terminus, the 237-residue chain is Ribosomal RNA small subunit methyltransferase G (237 aa).

Residues Gly-78, Phe-83, 129–130 (AE), and Arg-148 each bind S-adenosyl-L-methionine.

This sequence belongs to the methyltransferase superfamily. RNA methyltransferase RsmG family.

It localises to the cytoplasm. Specifically methylates the N7 position of a guanine in 16S rRNA. The chain is Ribosomal RNA small subunit methyltransferase G from Streptococcus thermophilus (strain CNRZ 1066).